Reading from the N-terminus, the 420-residue chain is Gamma-glutamyl phosphate reductase (420 aa).

Belongs to the gamma-glutamyl phosphate reductase family.

It localises to the cytoplasm. The enzyme catalyses L-glutamate 5-semialdehyde + phosphate + NADP(+) = L-glutamyl 5-phosphate + NADPH + H(+). The protein operates within amino-acid biosynthesis; L-proline biosynthesis; L-glutamate 5-semialdehyde from L-glutamate: step 2/2. Its function is as follows. Catalyzes the NADPH-dependent reduction of L-glutamate 5-phosphate into L-glutamate 5-semialdehyde and phosphate. The product spontaneously undergoes cyclization to form 1-pyrroline-5-carboxylate. The chain is Gamma-glutamyl phosphate reductase from Streptococcus pneumoniae (strain CGSP14).